Consider the following 149-residue polypeptide: Oocyte-expressed protein (149 aa).

Positions 49–110 (PLVFYLEAWL…RVQNRVKSVL (62 aa)) constitute a KH; atypical domain.

Belongs to the KHDC1 family. In terms of assembly, component of the subcortical maternal complex (SCMC), at least composed of NLRP5, KHDC3, OOEP, and TLE6. Within the complex, interacts with NLRP5, KHDC3 and TLE6. As part of the SCMC interacts with the SCMC-associated protein NLRP4F. The SCMC may facilitate translocation of its components between the nuclear and cytoplasmic compartments. Forms a scaffold complex with KHDC3/FILIA, and interacts with BLM and TRIM25 at DNA replication forks.

The protein localises to the cytoplasm. It is found in the nucleus. In terms of biological role, component of the subcortical maternal complex (SCMC), a multiprotein complex that plays a key role in early embryonic development. The SCMC complex is a structural constituent of cytoplasmic lattices, which consist in fibrous structures found in the cytoplasm of oocytes and preimplantation embryos. They are required to store maternal proteins critical for embryonic development, such as proteins that control epigenetic reprogramming of the preimplantation embryo, and prevent their degradation or activation. As part of the OOEP-KHDC3 scaffold, recruits BLM and TRIM25 to DNA replication forks, thereby promoting the ubiquitination of BLM by TRIM25, enhancing BLM retainment at replication forks and therefore promoting stalled replication fork restart. Positively regulates the homologous recombination-mediated DNA double-strand break (DSB) repair pathway by regulating ATM activation and RAD51 recruitment to DSBs in oocytes. Thereby contributes to oocyte survival and the resumption and completion of meiosis. The polypeptide is Oocyte-expressed protein (OOEP) (Canis lupus familiaris (Dog)).